A 194-amino-acid chain; its full sequence is Mitochondrial inner membrane protease ATP23 (194 aa).

Residues 1–20 are disordered; that stretch reads MEDAAAPNSGSEFNPGARRG. Position 96 (H96) interacts with Zn(2+). E97 is an active-site residue. Residue H100 participates in Zn(2+) binding.

The protein belongs to the peptidase M76 family.

It localises to the mitochondrion inner membrane. Functionally, has a dual role in the assembly of mitochondrial ATPase. Acts as a protease that removes the N-terminal 10 residues of mitochondrial ATPase CF(0) subunit 6 (ATP6) at the intermembrane space side. Also involved in the correct assembly of the membrane-embedded ATPase CF(0) particle, probably mediating association of ATP6 with the subunit 9 ring. The polypeptide is Mitochondrial inner membrane protease ATP23 (Arabidopsis thaliana (Mouse-ear cress)).